The sequence spans 217 residues: Large ribosomal subunit protein uL3 (217 aa).

The protein belongs to the universal ribosomal protein uL3 family. As to quaternary structure, part of the 50S ribosomal subunit. Forms a cluster with proteins L14 and L19.

Functionally, one of the primary rRNA binding proteins, it binds directly near the 3'-end of the 23S rRNA, where it nucleates assembly of the 50S subunit. The protein is Large ribosomal subunit protein uL3 of Mycolicibacterium paratuberculosis (strain ATCC BAA-968 / K-10) (Mycobacterium paratuberculosis).